The sequence spans 382 residues: Serine/arginine-rich splicing factor SR45a (382 aa).

4 stretches are compositionally biased toward low complexity: residues 30–45 (PMSY…SLSP), 54–68 (VSRS…SVSS), 177–195 (PSYS…SRSY), and 202–219 (SYSP…YSPF). Disordered regions lie at residues 30–76 (PMSY…PGNS) and 150–382 (KARR…SVSP). The segment covering 288–316 (RARDRSCSPYYRGRDRSYSPHYQGRDRSY) has biased composition (basic and acidic residues). Residues 329–343 (VSGSVSPGGRSMSRS) show a composition bias toward low complexity. Positions 345-361 (SPRKGRKESRSKSRRHD) are enriched in basic residues. Low complexity predominate over residues 364 to 382 (SSMCHSRSARSSTSRSVSP).

The protein belongs to the splicing factor SR family. SR45 subfamily. Component of the spliceosome. Homodimer. Interacts with PRP38, SCL28, SR45, RNU1 and U2AF35B. In terms of processing, phosphorylated. In terms of tissue distribution, expressed in leaves, stems and roots.

It is found in the nucleus speckle. Functionally, probable splicing factor involved in constitutive and/or alternative splicing events. May bridge the 5' and 3' components of the spliceosome. This is Serine/arginine-rich splicing factor SR45a (SR45A) from Arabidopsis thaliana (Mouse-ear cress).